The primary structure comprises 459 residues: MNQNPVEEGQKFPLTIRRMGINGEGIGYFKKAVVFVPGAITGEEVVVEAVKVRDRFTEAKLNKIRKKSPNRVTAPCPVYEACGGCQLQHVAYSAQLELKRDIVIQSIEKHTKIDPTKLKIRPTIGMEDPWRYRNKSQFQTRMVGSGQVETGLFGANSHQLVPIEDCIVQQPVTIKVTNFVRDLLEKYGVPIYDEKAGSGIVRTIVVRTGVKTGETQLVFITNSKKLPKKREMLAEIEAALPEVTSIMQNVNQAKSSLIFGDETFLLAGKESIEEKLMELEFDLSARAFFQLNPFQTERLYQEVEKALVLTGSETLVDAYCGVGTIGQAFAGKVKEVRGMDIIPESIEDAKRNAEKNGIENVYYEVGKAEDVLPKWVNEGFRPDAVIVDPPRSGCDQGLIKSLLDVEAKQLVYVSCNPSTLARDLALLAKKYRIRYMQPVDMFPQTAHVETVVLLQLKDK.

The TRAM domain maps to 5–63 (PVEEGQKFPLTIRRMGINGEGIGYFKKAVVFVPGAITGEEVVVEAVKVRDRFTEAKLNK). Cys76, Cys82, Cys85, and Cys166 together coordinate [4Fe-4S] cluster. The S-adenosyl-L-methionine site is built by Gln290, Tyr319, Asp340, and Asp388. Cys415 acts as the Nucleophile in catalysis.

It belongs to the class I-like SAM-binding methyltransferase superfamily. RNA M5U methyltransferase family.

This is an uncharacterized protein from Listeria monocytogenes serotype 4b (strain F2365).